Here is a 234-residue protein sequence, read N- to C-terminus: Synaptogyrin-4 (234 aa).

The 152-residue stretch at 18–169 (FLRRPKTITR…QAYLAFQDLR (152 aa)) folds into the MARVEL domain. 4 helical membrane-spanning segments follow: residues 25–45 (ITRV…LTDG), 66–86 (CSFA…FLVL), 104–124 (LLDF…FCFL), and 145–165 (AAIA…YLAF).

This sequence belongs to the synaptogyrin family.

It localises to the membrane. The sequence is that of Synaptogyrin-4 (SYNGR4) from Homo sapiens (Human).